Reading from the N-terminus, the 192-residue chain is Protein hunchback (192 aa).

Disordered regions lie at residues 16-59, 88-108, and 151-192; these read SHHH…SNTN, AAMT…WPGL, and ALTP…KYMA. Residues 17-31 show a composition bias toward basic residues; the sequence is HHHHHHHAHHSRRQH. The segment covering 92 to 103 has biased composition (polar residues); that stretch reads PSPSNNDQNSPL. Over residues 173–192 the composition is skewed to basic and acidic residues; it reads EPEKEHDLMSNSSEDMKYMA.

This sequence belongs to the hunchback C2H2-type zinc-finger protein family.

It localises to the nucleus. Gap class segmentation protein that controls development of head structures. This chain is Protein hunchback (hb), found in Drosophila adiastola (Fruit fly).